Reading from the N-terminus, the 301-residue chain is tRNA pseudouridine synthase B (301 aa).

Catalysis depends on aspartate 38, which acts as the Nucleophile.

Belongs to the pseudouridine synthase TruB family. Type 1 subfamily.

It carries out the reaction uridine(55) in tRNA = pseudouridine(55) in tRNA. Functionally, responsible for synthesis of pseudouridine from uracil-55 in the psi GC loop of transfer RNAs. In Limosilactobacillus reuteri (strain DSM 20016) (Lactobacillus reuteri), this protein is tRNA pseudouridine synthase B.